The chain runs to 241 residues: Oil body-associated protein 1B (241 aa).

The span at 1 to 12 (MEKAVHSSTTSG) shows a compositional bias: polar residues. The tract at residues 1–22 (MEKAVHSSTTSGPAVPGETTKT) is disordered.

The protein belongs to the OBAP family.

The sequence is that of Oil body-associated protein 1B from Arabidopsis thaliana (Mouse-ear cress).